A 159-amino-acid chain; its full sequence is 2-C-methyl-D-erythritol 2,4-cyclodiphosphate synthase (159 aa).

Aspartate 8 and histidine 10 together coordinate a divalent metal cation. Residues 8–10 and 34–35 contribute to the 4-CDP-2-C-methyl-D-erythritol 2-phosphate site; these read DVH and HS. A divalent metal cation is bound at residue histidine 42. 4-CDP-2-C-methyl-D-erythritol 2-phosphate-binding positions include 56 to 58, 61 to 65, 100 to 106, 132 to 135, phenylalanine 139, and arginine 142; these read DIG, FPDTD, AQAPKMA, and TTSE.

It belongs to the IspF family. Homotrimer. A divalent metal cation serves as cofactor.

The enzyme catalyses 4-CDP-2-C-methyl-D-erythritol 2-phosphate = 2-C-methyl-D-erythritol 2,4-cyclic diphosphate + CMP. It functions in the pathway isoprenoid biosynthesis; isopentenyl diphosphate biosynthesis via DXP pathway; isopentenyl diphosphate from 1-deoxy-D-xylulose 5-phosphate: step 4/6. Its function is as follows. Involved in the biosynthesis of isopentenyl diphosphate (IPP) and dimethylallyl diphosphate (DMAPP), two major building blocks of isoprenoid compounds. Catalyzes the conversion of 4-diphosphocytidyl-2-C-methyl-D-erythritol 2-phosphate (CDP-ME2P) to 2-C-methyl-D-erythritol 2,4-cyclodiphosphate (ME-CPP) with a corresponding release of cytidine 5-monophosphate (CMP). The protein is 2-C-methyl-D-erythritol 2,4-cyclodiphosphate synthase of Aliivibrio salmonicida (strain LFI1238) (Vibrio salmonicida (strain LFI1238)).